We begin with the raw amino-acid sequence, 70 residues long: Cold shock protein CspV (70 aa).

In terms of domain architecture, CSD spans 7–67; that stretch reads GSVKWFNETK…GKKGPQASNV (61 aa).

It localises to the cytoplasm. The polypeptide is Cold shock protein CspV (cspV) (Vibrio cholerae serotype O1 (strain ATCC 39315 / El Tor Inaba N16961)).